The following is a 412-amino-acid chain: Eukaryotic initiation factor 4A-1 (412 aa).

Ala2 carries the post-translational modification N-acetylalanine. A Q motif motif is present at residues 39-67 (ESFDAMGLQENLLRGIYAYGFEKPSAIQQ). One can recognise a Helicase ATP-binding domain in the interval 70 to 240 (IVPFCKGLDV…RKFMSKPVRI (171 aa)). 83-90 (AQSGTGKT) is a binding site for ATP. Position 104 is a phosphoserine (Ser104). The residue at position 145 (Thr145) is a Phosphothreonine. Residues 188–191 (DEAD) carry the DEAD box motif. The region spanning 251-412 (GIKQFYVNVE…ELPSNVADLL (162 aa)) is the Helicase C-terminal domain.

Belongs to the DEAD box helicase family. eIF4A subfamily. In terms of assembly, eIF4F is a multi-subunit complex, the composition of which varies with external and internal environmental conditions. It is composed of at least EIF4A, EIF4E and EIF4G. Interacts with CDKA-1. Interacts with MRF1, MRF2, MRF3/ECIP1 and MRF4. In terms of tissue distribution, highly expressed in the whole plant.

The protein resides in the cytoplasm. It catalyses the reaction ATP + H2O = ADP + phosphate + H(+). Its function is as follows. ATP-dependent RNA helicase which is a subunit of the eIF4F complex involved in cap recognition and is required for mRNA binding to ribosome. In the current model of translation initiation, eIF4A unwinds RNA secondary structures in the 5'-UTR of mRNAs which is necessary to allow efficient binding of the small ribosomal subunit, and subsequent scanning for the initiator codon. The chain is Eukaryotic initiation factor 4A-1 from Arabidopsis thaliana (Mouse-ear cress).